A 139-amino-acid chain; its full sequence is Hydrogenase maturation factor HypA (139 aa).

Residue His2 participates in Ni(2+) binding. Zn(2+)-binding residues include Cys73, Cys76, Cys110, and Cys113.

It belongs to the HypA/HybF family.

Involved in the maturation of [NiFe] hydrogenases. Required for nickel insertion into the metal center of the hydrogenase. This chain is Hydrogenase maturation factor HypA, found in Thermococcus onnurineus (strain NA1).